Here is a 353-residue protein sequence, read N- to C-terminus: MRLTIIIPTCNNEATIRQLLISIESKEHYRILCIDGGSTDQTIPMIERLPRELKHISLIQLQNASIATCINKGLMDIKMTDPHDSDAFMVINPTSIVLPGKLDRLTAAFKNNDNIDMVIGQRAYNYHGEWKLKSADEFIKDNRIVTLTEQPDLLSMMSFDGKLFSAKFAELQCDETLANTYNHTILVKAMQKATDIHLVSQMIVGDNDIDTHATSNDEDFNRYITEIMKIRQRVMEMLLLPEQRLLYSDMVDRILFNNSLKYYMNEHPAVTHTTIQLVKDYIMSMQHSDYVSQNMFDIINTVEFIGENWDREIYELWRQTLIQVGINRPTYKKFLIQLKGRKFAHRTKSMLKR.

The protein belongs to the glycosyltransferase 2 family.

In Staphylococcus aureus (strain MSSA476), this protein is Putative glycosyltransferase TagX (tagX).